We begin with the raw amino-acid sequence, 160 residues long: Ribosomal RNA large subunit methyltransferase H (160 aa).

Leu-76 and Gly-108 together coordinate S-adenosyl-L-methionine.

This sequence belongs to the RNA methyltransferase RlmH family. Homodimer.

Its subcellular location is the cytoplasm. The catalysed reaction is pseudouridine(1915) in 23S rRNA + S-adenosyl-L-methionine = N(3)-methylpseudouridine(1915) in 23S rRNA + S-adenosyl-L-homocysteine + H(+). Functionally, specifically methylates the pseudouridine at position 1915 (m3Psi1915) in 23S rRNA. The protein is Ribosomal RNA large subunit methyltransferase H of Rhodopseudomonas palustris (strain ATCC BAA-98 / CGA009).